The chain runs to 92 residues: Small ribosomal subunit protein uS19 (92 aa).

It belongs to the universal ribosomal protein uS19 family.

Its function is as follows. Protein S19 forms a complex with S13 that binds strongly to the 16S ribosomal RNA. The sequence is that of Small ribosomal subunit protein uS19 from Wigglesworthia glossinidia brevipalpis.